A 639-amino-acid chain; its full sequence is Collagen alpha-1(XII) chain (639 aa).

Residues 1–114 (CRKSLLQAVA…DSLSKIVDDL (114 aa)) form the VWFA domain. Fibronectin type-III domains follow at residues 130–219 (APSN…LPVP), 220–310 (IVSL…LPLP), 311–401 (RPQD…VPAP), 402–490 (TNLR…SPKS), 491–585 (GPRN…TVRN), and 586–639 (LRVY…LRNL). The disordered stretch occupies residues 473 to 496 (DESESDDLTGSERTSPKSGPRNLQ).

It belongs to the fibril-associated collagens with interrupted helices (FACIT) family. In terms of assembly, trimer of identical chains each containing 190 kDa of non-triple-helical sequences. The triple-helical tail is stabilized by disulfide bonds at each end. Post-translationally, prolines at the third position of the tripeptide repeating unit (G-X-Y) are hydroxylated in some or all of the chains. In terms of processing, O-glycosylated; glycosaminoglycan of chondroitin-sulfate type.

It localises to the secreted. The protein resides in the extracellular space. The protein localises to the extracellular matrix. Type XII collagen interacts with type I collagen-containing fibrils, the COL1 domain could be associated with the surface of the fibrils, and the COL2 and NC3 domains may be localized in the perifibrillar matrix. In Oryctolagus cuniculus (Rabbit), this protein is Collagen alpha-1(XII) chain (COL12A1).